A 441-amino-acid chain; its full sequence is ATP-dependent protease ATPase subunit HslU (441 aa).

ATP contacts are provided by residues Ile18, 60-65 (GVGKTE), Asp254, Glu319, and Arg391.

This sequence belongs to the ClpX chaperone family. HslU subfamily. As to quaternary structure, a double ring-shaped homohexamer of HslV is capped on each side by a ring-shaped HslU homohexamer. The assembly of the HslU/HslV complex is dependent on binding of ATP.

It is found in the cytoplasm. Its function is as follows. ATPase subunit of a proteasome-like degradation complex; this subunit has chaperone activity. The binding of ATP and its subsequent hydrolysis by HslU are essential for unfolding of protein substrates subsequently hydrolyzed by HslV. HslU recognizes the N-terminal part of its protein substrates and unfolds these before they are guided to HslV for hydrolysis. The sequence is that of ATP-dependent protease ATPase subunit HslU from Actinobacillus succinogenes (strain ATCC 55618 / DSM 22257 / CCUG 43843 / 130Z).